Here is a 131-residue protein sequence, read N- to C-terminus: Arsenate reductase 2 (131 aa).

Active-site nucleophile residues include cysteine 10, cysteine 82, and cysteine 89. 2 cysteine pairs are disulfide-bonded: cysteine 10/cysteine 82 and cysteine 82/cysteine 89.

It belongs to the low molecular weight phosphotyrosine protein phosphatase family. Thioredoxin-coupled ArsC subfamily.

It is found in the cytoplasm. It catalyses the reaction arsenate + [thioredoxin]-dithiol + H(+) = arsenite + [thioredoxin]-disulfide + H2O. In terms of biological role, catalyzes the reduction of arsenate [As(V)] to arsenite [As(III)]. In Staphylococcus epidermidis (strain ATCC 35984 / DSM 28319 / BCRC 17069 / CCUG 31568 / BM 3577 / RP62A), this protein is Arsenate reductase 2.